We begin with the raw amino-acid sequence, 279 residues long: tRNA pseudouridine synthase A (279 aa).

The active-site Nucleophile is aspartate 54. Substrate is bound at residue tyrosine 112.

This sequence belongs to the tRNA pseudouridine synthase TruA family. Homodimer.

The enzyme catalyses uridine(38/39/40) in tRNA = pseudouridine(38/39/40) in tRNA. Formation of pseudouridine at positions 38, 39 and 40 in the anticodon stem and loop of transfer RNAs. This is tRNA pseudouridine synthase A from Cutibacterium acnes (strain DSM 16379 / KPA171202) (Propionibacterium acnes).